The sequence spans 688 residues: Translation initiation factor IF-2 (688 aa).

Composition is skewed to basic and acidic residues over residues 53–62 (GKEKSEKTKE) and 86–95 (KRDDKNEKVN). The disordered stretch occupies residues 53–100 (GKEKSEKTKEEDDEIETTAKNPIKESMNNKKSNKRDDKNEKVNTENAE). The region spanning 187–354 (KRSPIITVMG…MILLSSEILE (168 aa)) is the tr-type G domain. The G1 stretch occupies residues 196–203 (GHVDHGKT). 196–203 (GHVDHGKT) is a binding site for GTP. Residues 221-225 (GITQH) are G2. The tract at residues 242 to 245 (DTPG) is G3. Residues 242 to 246 (DTPGH) and 296 to 299 (NKID) each bind GTP. The interval 296–299 (NKID) is G4. Positions 332 to 334 (SAH) are G5.

This sequence belongs to the TRAFAC class translation factor GTPase superfamily. Classic translation factor GTPase family. IF-2 subfamily.

The protein localises to the cytoplasm. Functionally, one of the essential components for the initiation of protein synthesis. Protects formylmethionyl-tRNA from spontaneous hydrolysis and promotes its binding to the 30S ribosomal subunits. Also involved in the hydrolysis of GTP during the formation of the 70S ribosomal complex. The polypeptide is Translation initiation factor IF-2 (Clostridium botulinum (strain Kyoto / Type A2)).